Consider the following 437-residue polypeptide: Serine hydroxymethyltransferase 1 (437 aa).

(6S)-5,6,7,8-tetrahydrofolate contacts are provided by residues leucine 132 and 136-138; that span reads GHL. Residue lysine 241 is modified to N6-(pyridoxal phosphate)lysine.

This sequence belongs to the SHMT family. In terms of assembly, homodimer. It depends on pyridoxal 5'-phosphate as a cofactor.

It is found in the cytoplasm. The catalysed reaction is (6R)-5,10-methylene-5,6,7,8-tetrahydrofolate + glycine + H2O = (6S)-5,6,7,8-tetrahydrofolate + L-serine. It participates in one-carbon metabolism; tetrahydrofolate interconversion. The protein operates within amino-acid biosynthesis; glycine biosynthesis; glycine from L-serine: step 1/1. Functionally, catalyzes the reversible interconversion of serine and glycine with tetrahydrofolate (THF) serving as the one-carbon carrier. This reaction serves as the major source of one-carbon groups required for the biosynthesis of purines, thymidylate, methionine, and other important biomolecules. Also exhibits THF-independent aldolase activity toward beta-hydroxyamino acids, producing glycine and aldehydes, via a retro-aldol mechanism. This is Serine hydroxymethyltransferase 1 from Mesorhizobium japonicum (strain LMG 29417 / CECT 9101 / MAFF 303099) (Mesorhizobium loti (strain MAFF 303099)).